We begin with the raw amino-acid sequence, 336 residues long: Dihydroorotate dehydrogenase (quinone) (336 aa).

FMN is bound by residues 62-66 (AGLDK) and T86. A substrate-binding site is contributed by K66. Position 111-115 (111-115 (NRMGF)) interacts with substrate. FMN contacts are provided by N139 and N172. Substrate is bound at residue N172. The active-site Nucleophile is S175. Position 177 (N177) interacts with substrate. The FMN site is built by K217 and T245. 246 to 247 (NT) contributes to the substrate binding site. FMN-binding positions include G268, G297, and 318-319 (YS).

This sequence belongs to the dihydroorotate dehydrogenase family. Type 2 subfamily. In terms of assembly, monomer. FMN serves as cofactor.

It is found in the cell membrane. The enzyme catalyses (S)-dihydroorotate + a quinone = orotate + a quinol. It participates in pyrimidine metabolism; UMP biosynthesis via de novo pathway; orotate from (S)-dihydroorotate (quinone route): step 1/1. Catalyzes the conversion of dihydroorotate to orotate with quinone as electron acceptor. The polypeptide is Dihydroorotate dehydrogenase (quinone) (Psychromonas ingrahamii (strain DSM 17664 / CCUG 51855 / 37)).